Consider the following 733-residue polypeptide: MSTDSQCPVTGRANKHAARVGRMNRDWWPNQLNLKILHQHSPLSNPMGGNFNYSEEFKALDLAAVRNDIFELMTNSQDWWPADYGHYGPLFIRMAWHSAGTYRTGDGRGGARSGSQRFAPLNSWPDNANLDKARMLLWPIKQKYGKKISWADLLIFAGNCALESMGFKTFGFGGGREDIWEPGEDIYWGAEDTWLGDKRYSGERLLENPLAAVQMGLIYVNPEGPNGNPDPLAAAKDIRETFARMAMNDEETVALIAGGHTFGKCHGAGAATHVGPEPEGASIIEQGLGWKCSLGTGRGEHTITSGLEGAWTTNPVKWDNGFFDVLFSYDWALAKSPAGAHQWIPTDPAAKGTVPDAHNPAKRHAPMMLTTDLALKLDPIYGPISKRFHEQPDLFADAFARAWFKLTHRDMGPRACYLGPEVPAEDLIWQDPLPARNHELIDDQDIAELKGKIVTSGLSVSQLVSTAWASASTFRSSDRRGGANGARIRLAPQKDWEVNQPAQLKLVLETLEGIQKQFNSAQSGGKRVSIADLIVLGGCAAVELAARNAGHEIIVPFTPGRTDAAQEQTDVVAFAPLEPAADGFRNYLKTRYSVSAEELLVDRAQLLTLSAPEMTVLIGGMRVLDANADRSRHGVFTRRPGTLTNDFFVNLLDMGTTWNATSEAEDVFEGRDRVTGEMKWTGTRVDLIFGSNSLLRAQAEVYGCKDAQEKFVVDFIAAWSKVMNLDRFDIANS.

Positions 96 to 219 form a cross-link, tryptophyl-tyrosyl-methioninium (Trp-Tyr) (with M-245); the sequence is WHSAGTYRTG…LAAVQMGLIY (124 aa). Histidine 97 acts as the Proton acceptor in catalysis. A cross-link (tryptophyl-tyrosyl-methioninium (Tyr-Met) (with W-96)) is located at residues 219 to 245; it reads YVNPEGPNGNPDPLAAAKDIRETFARM. Residue histidine 260 participates in heme b binding.

The protein belongs to the peroxidase family. Peroxidase/catalase subfamily. Homodimer or homotetramer. The cofactor is heme b. Formation of the three residue Trp-Tyr-Met cross-link is important for the catalase, but not the peroxidase activity of the enzyme.

It carries out the reaction H2O2 + AH2 = A + 2 H2O. It catalyses the reaction 2 H2O2 = O2 + 2 H2O. In terms of biological role, bifunctional enzyme with both catalase and broad-spectrum peroxidase activity. The chain is Catalase-peroxidase from Geobacter sp. (strain M21).